A 380-amino-acid polypeptide reads, in one-letter code: Cytochrome b (380 aa).

The next 4 membrane-spanning stretches (helical) occupy residues 33-53 (FGSL…FLAM), 77-98 (WLIR…YLHV), 113-133 (WNIG…GYVL), and 178-198 (FFAF…LHLL). Heme b contacts are provided by histidine 83 and histidine 97. Positions 182 and 196 each coordinate heme b. Histidine 201 provides a ligand contact to a ubiquinone. A run of 4 helical transmembrane segments spans residues 226 to 246 (YKDL…TLFS), 288 to 308 (LGGV…PLLH), 320 to 340 (LTQI…WIGG), and 347 to 367 (FITV…ILIP).

It belongs to the cytochrome b family. The cytochrome bc1 complex contains 3 respiratory subunits (MT-CYB, CYC1 and UQCRFS1), 2 core proteins (UQCRC1 and UQCRC2) and probably 6 low-molecular weight proteins. Heme b serves as cofactor.

The protein localises to the mitochondrion inner membrane. Functionally, component of the ubiquinol-cytochrome c reductase complex (complex III or cytochrome b-c1 complex) that is part of the mitochondrial respiratory chain. The b-c1 complex mediates electron transfer from ubiquinol to cytochrome c. Contributes to the generation of a proton gradient across the mitochondrial membrane that is then used for ATP synthesis. The chain is Cytochrome b (mt-cyb) from Allocyttus niger (Black oreo dory).